The sequence spans 139 residues: Putative pre-16S rRNA nuclease (139 aa).

This sequence belongs to the YqgF nuclease family.

It is found in the cytoplasm. Functionally, could be a nuclease involved in processing of the 5'-end of pre-16S rRNA. This Thermoanaerobacter pseudethanolicus (strain ATCC 33223 / 39E) (Clostridium thermohydrosulfuricum) protein is Putative pre-16S rRNA nuclease.